Consider the following 100-residue polypeptide: Elevenin-Vc1 (100 aa).

A signal peptide spans 1 to 24 (MAPSQKALLVLVLSMLLTASDSWA). Cys-29 and Cys-38 are joined by a disulfide. A propeptide spanning residues 44 to 100 (KRGGDSLSVGGSAELDDALTDPFLRSEEPREWRELTRLSRVLQTFLSHPTGETEQHD) is cleaved from the precursor.

This sequence belongs to the elevenin family. As to quaternary structure, monomer. As to expression, expressed by the venom duct.

The protein resides in the secreted. Its function is as follows. May mimic the function of prey elevenin neuropeptide. In vivo, intracranial injection in mice induces hyperactivity (tested at 5 and 10 nM). The chain is Elevenin-Vc1 from Conus victoriae (Queen Victoria cone).